A 160-amino-acid chain; its full sequence is UPF0178 protein PLES_56411 (160 aa).

It belongs to the UPF0178 family.

In Pseudomonas aeruginosa (strain LESB58), this protein is UPF0178 protein PLES_56411.